Here is a 191-residue protein sequence, read N- to C-terminus: IMP cyclohydrolase (191 aa).

Belongs to the archaeal IMP cyclohydrolase family.

It carries out the reaction IMP + H2O = 5-formamido-1-(5-phospho-D-ribosyl)imidazole-4-carboxamide. Its pathway is purine metabolism; IMP biosynthesis via de novo pathway; IMP from 5-formamido-1-(5-phospho-D-ribosyl)imidazole-4-carboxamide: step 1/1. Its function is as follows. Catalyzes the cyclization of 5-formylamidoimidazole-4-carboxamide ribonucleotide to IMP. This Natronomonas pharaonis (strain ATCC 35678 / DSM 2160 / CIP 103997 / JCM 8858 / NBRC 14720 / NCIMB 2260 / Gabara) (Halobacterium pharaonis) protein is IMP cyclohydrolase.